Consider the following 376-residue polypeptide: UPF0754 membrane protein Sca_1420 (376 aa).

Transmembrane regions (helical) follow at residues 4-24 and 356-376; these read FLVI…TNII and LLGF…ALFV.

This sequence belongs to the UPF0754 family.

It localises to the cell membrane. The sequence is that of UPF0754 membrane protein Sca_1420 from Staphylococcus carnosus (strain TM300).